We begin with the raw amino-acid sequence, 205 residues long: Large ribosomal subunit protein uL4 (205 aa).

It belongs to the universal ribosomal protein uL4 family. Part of the 50S ribosomal subunit.

One of the primary rRNA binding proteins, this protein initially binds near the 5'-end of the 23S rRNA. It is important during the early stages of 50S assembly. It makes multiple contacts with different domains of the 23S rRNA in the assembled 50S subunit and ribosome. Functionally, forms part of the polypeptide exit tunnel. In Ruegeria sp. (strain TM1040) (Silicibacter sp.), this protein is Large ribosomal subunit protein uL4.